Reading from the N-terminus, the 469-residue chain is L-seryl-tRNA(Sec) selenium transferase (469 aa).

An N6-(pyridoxal phosphate)lysine modification is found at lysine 295.

It belongs to the SelA family. The cofactor is pyridoxal 5'-phosphate.

The protein resides in the cytoplasm. It catalyses the reaction L-seryl-tRNA(Sec) + selenophosphate + H(+) = L-selenocysteinyl-tRNA(Sec) + phosphate. It participates in aminoacyl-tRNA biosynthesis; selenocysteinyl-tRNA(Sec) biosynthesis; selenocysteinyl-tRNA(Sec) from L-seryl-tRNA(Sec) (bacterial route): step 1/1. Functionally, converts seryl-tRNA(Sec) to selenocysteinyl-tRNA(Sec) required for selenoprotein biosynthesis. The sequence is that of L-seryl-tRNA(Sec) selenium transferase from Methylocella silvestris (strain DSM 15510 / CIP 108128 / LMG 27833 / NCIMB 13906 / BL2).